The sequence spans 207 residues: Protein FMP32, mitochondrial (207 aa).

Positions 100–136 form a coiled coil; that stretch reads ADRSEFHNIQNEYESVKNDLEKLRNKLREEITKTNAG. A helical transmembrane segment spans residues 184–206; the sequence is VMQWLIGVCTGTFALVLAYMRLL.

It belongs to the CCDC90 family.

Its subcellular location is the mitochondrion. It localises to the membrane. This chain is Protein FMP32, mitochondrial (FMP32), found in Saccharomyces cerevisiae (strain ATCC 204508 / S288c) (Baker's yeast).